Consider the following 1345-residue polypeptide: Rho guanine nucleotide exchange factor 10 (1345 aa).

2 disordered regions span residues 1–84 (MEQG…PAKL) and 99–120 (TPLQ…GVGL). Acidic residues predominate over residues 22–39 (NNEEEGELFDFDSGDEVP). Positions 40-54 (EADRQVPSADDRTRG) are enriched in basic and acidic residues. Residues 102–111 (QEDQPSSPDA) are compositionally biased toward polar residues. At S157 the chain carries Phosphoserine. Disordered regions lie at residues 158–195 (VEEE…SALA) and 207–273 (MENP…IPRS). The segment covering 171-191 (QCNSLSSEDLPHSSEQGSQEG) has biased composition (polar residues). A compositionally biased stretch (acidic residues) spans 224–239 (DSEPDEMIYDDVENGE). Positions 242–255 (GNSSPEYGWSSSEF) are enriched in low complexity. The stretch at 307–335 (GAMEIQQAKQRQERKMQKLMKAAKEGTKD) forms a coiled coil. The residue at position 355 (S355) is a Phosphoserine. The 188-residue stretch at 397-584 (VRRYILGSIV…ETLAEKLNER (188 aa)) folds into the DH domain. Disordered regions lie at residues 1202-1237 (DRAR…QPDT) and 1253-1306 (KNDL…RASS). Over residues 1256 to 1271 (LSSSSGSLNLSHGSSS) the composition is skewed to low complexity. S1262 is modified (phosphoserine). The residue at position 1314 (Q1314) is an N5-methylglutamine.

Post-translationally, methylated at Gln-1314 by N6AMT1. In terms of tissue distribution, ubiquitously expressed.

Its function is as follows. May play a role in developmental myelination of peripheral nerves. The chain is Rho guanine nucleotide exchange factor 10 (Arhgef10) from Mus musculus (Mouse).